A 423-amino-acid chain; its full sequence is Histidine--tRNA ligase (423 aa).

The protein belongs to the class-II aminoacyl-tRNA synthetase family. In terms of assembly, homodimer.

Its subcellular location is the cytoplasm. The enzyme catalyses tRNA(His) + L-histidine + ATP = L-histidyl-tRNA(His) + AMP + diphosphate + H(+). The protein is Histidine--tRNA ligase of Haemophilus ducreyi (strain 35000HP / ATCC 700724).